A 520-amino-acid polypeptide reads, in one-letter code: Probable cytochrome P450 4p2 (520 aa).

Heme is bound by residues glutamate 325 and cysteine 464.

This sequence belongs to the cytochrome P450 family. Requires heme as cofactor.

The protein localises to the endoplasmic reticulum membrane. Its subcellular location is the microsome membrane. Its function is as follows. May be involved in the metabolism of insect hormones and in the breakdown of synthetic insecticides. This is Probable cytochrome P450 4p2 (Cyp4p2) from Drosophila melanogaster (Fruit fly).